The chain runs to 202 residues: Pyrrolidone-carboxylate peptidase (202 aa).

Residues E78, C141, and H165 contribute to the active site.

This sequence belongs to the peptidase C15 family. Homotetramer.

Its subcellular location is the cytoplasm. The enzyme catalyses Release of an N-terminal pyroglutamyl group from a polypeptide, the second amino acid generally not being Pro.. Functionally, removes 5-oxoproline from various penultimate amino acid residues except L-proline. In Thermosipho melanesiensis (strain DSM 12029 / CIP 104789 / BI429), this protein is Pyrrolidone-carboxylate peptidase.